Reading from the N-terminus, the 219-residue chain is tRNA (guanine-N(7)-)-methyltransferase (219 aa).

Residues Glu44, Asp69, Glu102, and Asn125 each contribute to the S-adenosyl-L-methionine site. Lys129 and Asp161 together coordinate substrate.

It belongs to the class I-like SAM-binding methyltransferase superfamily. TrmB family.

The enzyme catalyses guanosine(46) in tRNA + S-adenosyl-L-methionine = N(7)-methylguanosine(46) in tRNA + S-adenosyl-L-homocysteine. Its pathway is tRNA modification; N(7)-methylguanine-tRNA biosynthesis. Catalyzes the formation of N(7)-methylguanine at position 46 (m7G46) in tRNA. The polypeptide is tRNA (guanine-N(7)-)-methyltransferase (Clostridium perfringens (strain SM101 / Type A)).